The primary structure comprises 345 residues: Delta(1)-pyrroline-2-carboxylate reductase (345 aa).

S47 serves as the catalytic Charge relay system. Catalysis depends on H48, which acts as the Proton donor. R52 contacts substrate. Position 121–125 (121–125) interacts with NADP(+); that stretch reads HFSAL. T161 is a binding site for substrate. Residue 179–181 participates in NADP(+) binding; that stretch reads DFA. Residue 187–188 participates in substrate binding; that stretch reads RG. E189 (charge relay system) is an active-site residue. NADP(+) is bound by residues 230–231 and 305–311; these read HK and RLPSGRR.

It belongs to the LDH2/MDH2 oxidoreductase family. Homodimer.

It carries out the reaction L-proline + NAD(+) = 1-pyrroline-2-carboxylate + NADH + H(+). The enzyme catalyses L-proline + NADP(+) = 1-pyrroline-2-carboxylate + NADPH + H(+). Functionally, catalyzes the reduction of Delta(1)-pyrroline-2-carboxylate (Pyr2C) to L-proline, using NADPH as the electron donor. Is likely involved in a degradation pathway that converts trans-3-hydroxy-L-proline (t3LHyp) to L-proline, which would allow A.tumefaciens to grow on t3LHyp as a sole carbon source. The polypeptide is Delta(1)-pyrroline-2-carboxylate reductase (Agrobacterium fabrum (strain C58 / ATCC 33970) (Agrobacterium tumefaciens (strain C58))).